A 219-amino-acid polypeptide reads, in one-letter code: Proteasome subunit beta type-9 (219 aa).

Residues M1 to G20 constitute a propeptide, removed in mature form. The active-site Nucleophile is the T21. N6-acetyllysine occurs at positions 53 and 109.

This sequence belongs to the peptidase T1B family. In terms of assembly, the 26S proteasome consists of a 20S proteasome core and two 19S regulatory subunits. The 20S proteasome core is composed of 28 subunits that are arranged in four stacked rings, resulting in a barrel-shaped structure. The two end rings are each formed by seven alpha subunits, and the two central rings are each formed by seven beta subunits. The catalytic chamber with the active sites is on the inside of the barrel. Component of the immunoproteasome, where it displaces the equivalent housekeeping subunit PSMB6. Component of the spermatoproteasome, a form of the proteasome specifically found in testis. In terms of processing, autocleaved. The resulting N-terminal Thr residue of the mature subunit is responsible for the nucleophile proteolytic activity.

The protein resides in the cytoplasm. The protein localises to the nucleus. The enzyme catalyses Cleavage of peptide bonds with very broad specificity.. Functionally, the proteasome is a multicatalytic proteinase complex which is characterized by its ability to cleave peptides with Arg, Phe, Tyr, Leu, and Glu adjacent to the leaving group at neutral or slightly basic pH. The proteasome has an ATP-dependent proteolytic activity. This subunit is involved in antigen processing to generate class I binding peptides. The protein is Proteasome subunit beta type-9 (PSMB9) of Bos taurus (Bovine).